Reading from the N-terminus, the 669-residue chain is Acyl-coenzyme A oxidase 1 (669 aa).

Residues Thr-152 and Gly-191 each contribute to the FAD site. Glu-434 functions as the Proton acceptor in the catalytic mechanism. Position 544 is a phosphotyrosine (Tyr-544). A Phosphoserine modification is found at Ser-551. The Microbody targeting signal motif lies at 667-669 (AHL).

Belongs to the acyl-CoA oxidase family. In terms of assembly, homodimer. FAD serves as cofactor. Expressed in glia.

Its subcellular location is the peroxisome. The protein resides in the nucleus. It catalyses the reaction a 2,3-saturated acyl-CoA + O2 = a (2E)-enoyl-CoA + H2O2. It functions in the pathway lipid metabolism; peroxisomal fatty acid beta-oxidation. Functionally, catalyzes the desaturation of acyl-CoAs to 2-trans-enoyl-CoAs. First enzyme of the fatty acid beta-oxidation pathway. This is Acyl-coenzyme A oxidase 1 from Drosophila melanogaster (Fruit fly).